The following is a 293-amino-acid chain: Ethanolamine ammonia-lyase small subunit (293 aa).

2 residues coordinate adenosylcob(III)alamin: Val207 and Glu228.

It belongs to the EutC family. As to quaternary structure, the basic unit is a heterodimer which dimerizes to form tetramers. The heterotetramers trimerize; 6 large subunits form a core ring with 6 small subunits projecting outwards. Requires adenosylcob(III)alamin as cofactor.

It is found in the bacterial microcompartment. It carries out the reaction ethanolamine = acetaldehyde + NH4(+). The protein operates within amine and polyamine degradation; ethanolamine degradation. Functionally, catalyzes the deamination of various vicinal amino-alcohols to oxo compounds. Allows this organism to utilize ethanolamine as the sole source of nitrogen and carbon in the presence of external vitamin B12. The protein is Ethanolamine ammonia-lyase small subunit of Listeria monocytogenes serotype 4b (strain CLIP80459).